The primary structure comprises 308 residues: MAGKKNVLSSLAVYAEDSEPESDGEAGIEAVGSAAEEKGGLVSDAYGEDDFSRLGGDEDGYEEEEDENSRQSEDDDSETEKPEADDPKDNTEAEKRDPQELVASFSERVRNMSPDEIKIPPEPPGRCSNHLQDKIQKLYERKIKEGMDMNYIIQRKKEFRNPSIYEKLIQFCAIDELGTNYPKDMFDPHGWSEDSYYEALAKAQKIEMDKLEKAKKERTKIEFVTGTKKGTTTNATSTTTTTASTAVADAQKRKSKWDSAIPVTTIAQPTILTTTATLPAVVTVTTSASGSKTTVISAVGTIVKKAKQ.

The disordered stretch occupies residues 15–101 (AEDSEPESDG…EAEKRDPQEL (87 aa)). Acidic residues predominate over residues 16–26 (EDSEPESDGEA). Ser18, Ser22, Ser43, and Ser52 each carry phosphoserine. Acidic residues predominate over residues 57-78 (DEDGYEEEEDENSRQSEDDDSE). Basic and acidic residues predominate over residues 79 to 99 (TEKPEADDPKDNTEAEKRDPQ). Lys95 is covalently cross-linked (Glycyl lysine isopeptide (Lys-Gly) (interchain with G-Cter in SUMO2)). Ser113 carries the post-translational modification Phosphoserine. Residues Lys220, Lys304, and Lys305 each participate in a glycyl lysine isopeptide (Lys-Gly) (interchain with G-Cter in SUMO2) cross-link.

Belongs to the HCNGP family. As to quaternary structure, interacts with histone deacetylase complex subunit SAP30.

It is found in the nucleus. Functionally, plays a role in transcriptional repression by promoting histone deacetylase activity, leading to deacetylation of histone H3. May be involved in the regulation of beta-2-microglobulin genes. Its function is as follows. (Microbial infection) Involved in transcriptional repression of HHV-1 genes TK and gC. This is SAP30-binding protein from Homo sapiens (Human).